The following is an 81-amino-acid chain: Cytochrome b559 subunit alpha (81 aa).

A helical membrane pass occupies residues 21-35; the sequence is VIHSVTIPSLFVGGW. H23 provides a ligand contact to heme.

The protein belongs to the PsbE/PsbF family. Heterodimer of an alpha subunit and a beta subunit. PSII is composed of 1 copy each of membrane proteins PsbA, PsbB, PsbC, PsbD, PsbE, PsbF, PsbH, PsbI, PsbJ, PsbK, PsbL, PsbM, PsbT, PsbY, PsbZ, Psb30/Ycf12, at least 3 peripheral proteins of the oxygen-evolving complex and a large number of cofactors. It forms dimeric complexes. Heme b is required as a cofactor.

Its subcellular location is the plastid. The protein resides in the chloroplast thylakoid membrane. In terms of biological role, this b-type cytochrome is tightly associated with the reaction center of photosystem II (PSII). PSII is a light-driven water:plastoquinone oxidoreductase that uses light energy to abstract electrons from H(2)O, generating O(2) and a proton gradient subsequently used for ATP formation. It consists of a core antenna complex that captures photons, and an electron transfer chain that converts photonic excitation into a charge separation. This Euglena gracilis protein is Cytochrome b559 subunit alpha.